Consider the following 159-residue polypeptide: Large ribosomal subunit protein uL15 (159 aa).

The segment covering 1–13 (MRLNELRDNDGAT) has biased composition (basic and acidic residues). The interval 1 to 41 (MRLNELRDNDGATKIRTRVGRGIGSGKGKTGGRGVKGQKSR) is disordered. Over residues 21–35 (RGIGSGKGKTGGRGV) the composition is skewed to gly residues.

It belongs to the universal ribosomal protein uL15 family. Part of the 50S ribosomal subunit.

In terms of biological role, binds to the 23S rRNA. The sequence is that of Large ribosomal subunit protein uL15 from Maricaulis maris (strain MCS10) (Caulobacter maris).